Consider the following 892-residue polypeptide: Alanine--tRNA ligase (892 aa).

Zn(2+) is bound by residues histidine 574, histidine 578, cysteine 676, and histidine 680.

The protein belongs to the class-II aminoacyl-tRNA synthetase family. Requires Zn(2+) as cofactor.

It is found in the cytoplasm. It carries out the reaction tRNA(Ala) + L-alanine + ATP = L-alanyl-tRNA(Ala) + AMP + diphosphate. In terms of biological role, catalyzes the attachment of alanine to tRNA(Ala) in a two-step reaction: alanine is first activated by ATP to form Ala-AMP and then transferred to the acceptor end of tRNA(Ala). Also edits incorrectly charged Ser-tRNA(Ala) and Gly-tRNA(Ala) via its editing domain. This Prochlorococcus marinus (strain MIT 9303) protein is Alanine--tRNA ligase.